The sequence spans 134 residues: Small ribosomal subunit protein uS12 (134 aa).

Residues 1–26 (MPTTQQLLRKGRTTLQKKSKVPALKG) are disordered. The span at 9–20 (RKGRTTLQKKSK) shows a compositional bias: basic residues. Asp89 bears the 3-methylthioaspartic acid mark. Residues 103 to 134 (DTQGVKDRNKSRSKYGTKKPKAGAAAAGAKKK) are disordered. A compositionally biased stretch (basic residues) spans 113-123 (SRSKYGTKKPK). Residues 124 to 134 (AGAAAAGAKKK) show a composition bias toward low complexity.

It belongs to the universal ribosomal protein uS12 family. As to quaternary structure, part of the 30S ribosomal subunit. Contacts proteins S8 and S17. May interact with IF1 in the 30S initiation complex.

In terms of biological role, with S4 and S5 plays an important role in translational accuracy. Functionally, interacts with and stabilizes bases of the 16S rRNA that are involved in tRNA selection in the A site and with the mRNA backbone. Located at the interface of the 30S and 50S subunits, it traverses the body of the 30S subunit contacting proteins on the other side and probably holding the rRNA structure together. The combined cluster of proteins S8, S12 and S17 appears to hold together the shoulder and platform of the 30S subunit. This Deinococcus geothermalis (strain DSM 11300 / CIP 105573 / AG-3a) protein is Small ribosomal subunit protein uS12.